Here is a 172-residue protein sequence, read N- to C-terminus: Large ribosomal subunit protein uL10 (172 aa).

The protein belongs to the universal ribosomal protein uL10 family. Part of the ribosomal stalk of the 50S ribosomal subunit. The N-terminus interacts with L11 and the large rRNA to form the base of the stalk. The C-terminus forms an elongated spine to which L12 dimers bind in a sequential fashion forming a multimeric L10(L12)X complex.

Its function is as follows. Forms part of the ribosomal stalk, playing a central role in the interaction of the ribosome with GTP-bound translation factors. The sequence is that of Large ribosomal subunit protein uL10 from Bartonella tribocorum (strain CIP 105476 / IBS 506).